The primary structure comprises 90 residues: Probable Fe(2+)-trafficking protein (90 aa).

It belongs to the Fe(2+)-trafficking protein family.

Functionally, could be a mediator in iron transactions between iron acquisition and iron-requiring processes, such as synthesis and/or repair of Fe-S clusters in biosynthetic enzymes. This Pasteurella multocida (strain Pm70) protein is Probable Fe(2+)-trafficking protein.